The following is a 343-amino-acid chain: S-adenosylmethionine:tRNA ribosyltransferase-isomerase (343 aa).

This sequence belongs to the QueA family. In terms of assembly, monomer.

It localises to the cytoplasm. It carries out the reaction 7-aminomethyl-7-carbaguanosine(34) in tRNA + S-adenosyl-L-methionine = epoxyqueuosine(34) in tRNA + adenine + L-methionine + 2 H(+). The protein operates within tRNA modification; tRNA-queuosine biosynthesis. Its function is as follows. Transfers and isomerizes the ribose moiety from AdoMet to the 7-aminomethyl group of 7-deazaguanine (preQ1-tRNA) to give epoxyqueuosine (oQ-tRNA). This chain is S-adenosylmethionine:tRNA ribosyltransferase-isomerase, found in Latilactobacillus sakei subsp. sakei (strain 23K) (Lactobacillus sakei subsp. sakei).